A 59-amino-acid polypeptide reads, in one-letter code: UPF0434 protein lpl1884 (59 aa).

It belongs to the UPF0434 family.

The protein is UPF0434 protein lpl1884 of Legionella pneumophila (strain Lens).